A 172-amino-acid polypeptide reads, in one-letter code: Ribosome maturation factor RimM (172 aa).

The region spanning 99-171 (DDIPTWNYFI…LLTVEVPDGL (73 aa)) is the PRC barrel domain.

Belongs to the RimM family. Binds ribosomal protein uS19.

Its subcellular location is the cytoplasm. Functionally, an accessory protein needed during the final step in the assembly of 30S ribosomal subunit, possibly for assembly of the head region. Essential for efficient processing of 16S rRNA. May be needed both before and after RbfA during the maturation of 16S rRNA. It has affinity for free ribosomal 30S subunits but not for 70S ribosomes. In Phocaeicola vulgatus (strain ATCC 8482 / DSM 1447 / JCM 5826 / CCUG 4940 / NBRC 14291 / NCTC 11154) (Bacteroides vulgatus), this protein is Ribosome maturation factor RimM.